The chain runs to 404 residues: Deoxyguanosinetriphosphate triphosphohydrolase-like protein 1 (404 aa).

One can recognise an HD domain in the interval 75 to 219 (RLTHSIEVAQ…AAIADDIAYN (145 aa)).

It belongs to the dGTPase family. Type 2 subfamily.

The chain is Deoxyguanosinetriphosphate triphosphohydrolase-like protein 1 from Mesorhizobium japonicum (strain LMG 29417 / CECT 9101 / MAFF 303099) (Mesorhizobium loti (strain MAFF 303099)).